Here is a 428-residue protein sequence, read N- to C-terminus: Histidine--tRNA ligase (428 aa).

Belongs to the class-II aminoacyl-tRNA synthetase family. In terms of assembly, homodimer.

It is found in the cytoplasm. The enzyme catalyses tRNA(His) + L-histidine + ATP = L-histidyl-tRNA(His) + AMP + diphosphate + H(+). The protein is Histidine--tRNA ligase of Mesomycoplasma hyopneumoniae (strain J / ATCC 25934 / NCTC 10110) (Mycoplasma hyopneumoniae).